Consider the following 441-residue polypeptide: GPI mannosyltransferase 2 (441 aa).

10 helical membrane-spanning segments follow: residues 4 to 24 (MTVL…LILV), 35 to 55 (ILFG…PGLG), 115 to 135 (LLAL…IFGG), 143 to 163 (LCFL…LSAP), 165 to 185 (GEAL…SSVL), 199 to 223 (LLAA…GVLF), 249 to 269 (VIVL…YIAF), 306 to 326 (YWVV…ALLL), 361 to 381 (LAII…VQII), and 418 to 438 (VAVQ…GSFL).

The protein belongs to the PIGV family.

Its subcellular location is the endoplasmic reticulum membrane. Its pathway is glycolipid biosynthesis; glycosylphosphatidylinositol-anchor biosynthesis. Functionally, mannosyltransferase involved in glycosylphosphatidylinositol-anchor biosynthesis. Transfers the second mannose to the glycosylphosphatidylinositol during GPI precursor assembly. This Aspergillus fumigatus (strain ATCC MYA-4609 / CBS 101355 / FGSC A1100 / Af293) (Neosartorya fumigata) protein is GPI mannosyltransferase 2 (gpi18).